The sequence spans 328 residues: RNA-binding motif protein, X-linked 2 (328 aa).

K8 participates in a covalent cross-link: Glycyl lysine isopeptide (Lys-Gly) (interchain with G-Cter in SUMO2). The 79-residue stretch at 36 to 114 (AWIFLGGLPY…RTIRVDHVAN (79 aa)) folds into the RRM domain. Positions 118-328 (PQESEDVDDV…SFHASDRRHY (211 aa)) are disordered. T140 bears the Phosphothreonine mark. Phosphoserine is present on S149. Positions 157-172 (TKKPKKDKKEKKKKKE) are enriched in basic residues. 3 stretches are compositionally biased toward basic and acidic residues: residues 192-219 (TVKE…ECRE), 236-247 (GRAEEPEWEAKK), and 255-273 (KPSS…DRGR). A Glycyl lysine isopeptide (Lys-Gly) (interchain with G-Cter in SUMO2) cross-link involves residue K246. S274 carries the phosphoserine modification. The segment covering 291 to 314 (HRSRSRSRSRSPDRSHRHKKHRYS) has biased composition (basic residues). The span at 315-328 (HERESFHASDRRHY) shows a compositional bias: basic and acidic residues.

This sequence belongs to the IST3 family. In terms of assembly, part of the activated spliceosome B/catalytic step 1 spliceosome, one of the forms of the spliceosome which has a well-formed active site but still cannot catalyze the branching reaction and is composed of at least 52 proteins, the U2, U5 and U6 snRNAs and the pre-mRNA. Component of the minor spliceosome, which splices U12-type introns.

It is found in the nucleus. Functionally, involved in pre-mRNA splicing as component of the activated spliceosome. As a component of the minor spliceosome, involved in the splicing of U12-type introns in pre-mRNAs. This chain is RNA-binding motif protein, X-linked 2 (Rbmx2), found in Rattus norvegicus (Rat).